The chain runs to 505 residues: Putative F-box protein At1g58310 (505 aa).

Residues 7-55 (RDIISGLPDSLLCHILSFLNTKEAASTSVLAKKWRYLFASVPNLDFDDS) enclose the F-box domain.

This Arabidopsis thaliana (Mouse-ear cress) protein is Putative F-box protein At1g58310.